The sequence spans 399 residues: uncharacterized protein (399 aa).

Helical transmembrane passes span 46–66, 76–95, 139–159, 181–201, 226–246, 262–282, 303–323, 330–350, and 352–372; these read IAPY…FFIV, TLPR…YQTM, GVGY…FWMA, IIII…FWTF, LMLN…TCFF, ILPA…SFIW, VQFS…LAHM, IIQA…INYF, and GTII…SFVH.

It belongs to the CDP-alcohol phosphatidyltransferase class-I family.

The protein resides in the membrane. This is an uncharacterized protein from Dictyostelium discoideum (Social amoeba).